A 54-amino-acid chain; its full sequence is UPF0391 membrane protein Pmen_0080 (54 aa).

2 helical membrane passes run 4-24 and 28-48; these read WALT…GGIA and AGIA…SFIM.

This sequence belongs to the UPF0391 family.

It localises to the cell membrane. This chain is UPF0391 membrane protein Pmen_0080, found in Ectopseudomonas mendocina (strain ymp) (Pseudomonas mendocina).